A 118-amino-acid chain; its full sequence is Large ribosomal subunit protein uL24 (118 aa).

The protein belongs to the universal ribosomal protein uL24 family. As to quaternary structure, part of the 50S ribosomal subunit.

One of two assembly initiator proteins, it binds directly to the 5'-end of the 23S rRNA, where it nucleates assembly of the 50S subunit. Its function is as follows. One of the proteins that surrounds the polypeptide exit tunnel on the outside of the subunit. The chain is Large ribosomal subunit protein uL24 from Synechococcus sp. (strain CC9902).